Reading from the N-terminus, the 118-residue chain is V-type proton ATPase subunit F (118 aa).

Belongs to the V-ATPase F subunit family. As to quaternary structure, V-ATPase is a heteromultimeric enzyme composed of a peripheral catalytic V1 complex (components A to H) attached to an integral membrane V0 proton pore complex (components: a, c, c', c'', d, e, f and VOA1).

It is found in the vacuole membrane. Functionally, subunit of the V1 complex of vacuolar(H+)-ATPase (V-ATPase), a multisubunit enzyme composed of a peripheral complex (V1) that hydrolyzes ATP and a membrane integral complex (V0) that translocates protons. V-ATPase is responsible for acidifying and maintaining the pH of intracellular compartments. In Saccharomyces cerevisiae (strain ATCC 204508 / S288c) (Baker's yeast), this protein is V-type proton ATPase subunit F.